Consider the following 81-residue polypeptide: MTETEILERIRSIFQENFAIDPARVTPEAHLFEELDLDSIDAVDLAIKLQEMTGRRIKPEEFKSVRTVGDVIGAVQSLLAA.

The region spanning 1-79 (MTETEILERI…DVIGAVQSLL (79 aa)) is the Carrier domain. Ser39 bears the O-(pantetheine 4'-phosphoryl)serine mark.

The protein belongs to the acyl carrier protein (ACP) family. Post-translationally, 4'-phosphopantetheine is transferred from CoA to a specific serine of apo-ACP by AcpS. This modification is essential for activity because fatty acids are bound in thioester linkage to the sulfhydryl of the prosthetic group.

The protein resides in the cytoplasm. It functions in the pathway lipid metabolism; fatty acid biosynthesis. Its function is as follows. Carrier of the growing fatty acid chain in fatty acid biosynthesis. The chain is Acyl carrier protein 2 from Ralstonia nicotianae (strain ATCC BAA-1114 / GMI1000) (Ralstonia solanacearum).